A 344-amino-acid polypeptide reads, in one-letter code: MTVILAIESSCDETGVGIAELTPDGSVVLLADEVASSVEEHARFGGVVPEIASRAHLEALGVTARRALDLAGVQRPDVVAATIGPGLAGALLVGVSAAKGLALAWGVPFYGVNHLGGHIAADVYENGPLPECVALLVSGGHTSLLHVRSLAEPIEELGATVDDAAGEAYDKVARLLGLGYPGGKVLDELAQQGDSSAVPFPRGMTGPRDARHSFSFSGLKTAVARYLEKHGVEADFSPADVAAGFQEAVADVLTMKAVRAATDLGVSTLLIAGGVAANSRVRALAEQRCAETGLTLRVPPLRLCTDNGAMIASFAAHLVAAGAQPSSLQAAADPGLPVVKGQVH.

Positions 114 and 118 each coordinate Fe cation. Substrate contacts are provided by residues 136 to 140 (LVSGG), aspartate 170, glycine 183, aspartate 187, and asparagine 278. Position 306 (aspartate 306) interacts with Fe cation.

It belongs to the KAE1 / TsaD family. Fe(2+) serves as cofactor.

Its subcellular location is the cytoplasm. The enzyme catalyses L-threonylcarbamoyladenylate + adenosine(37) in tRNA = N(6)-L-threonylcarbamoyladenosine(37) in tRNA + AMP + H(+). In terms of biological role, required for the formation of a threonylcarbamoyl group on adenosine at position 37 (t(6)A37) in tRNAs that read codons beginning with adenine. Is involved in the transfer of the threonylcarbamoyl moiety of threonylcarbamoyl-AMP (TC-AMP) to the N6 group of A37, together with TsaE and TsaB. TsaD likely plays a direct catalytic role in this reaction. The sequence is that of tRNA N6-adenosine threonylcarbamoyltransferase from Mycobacteroides abscessus (strain ATCC 19977 / DSM 44196 / CCUG 20993 / CIP 104536 / JCM 13569 / NCTC 13031 / TMC 1543 / L948) (Mycobacterium abscessus).